Here is a 187-residue protein sequence, read N- to C-terminus: UPF0301 protein Sputcn32_2681 (187 aa).

Belongs to the UPF0301 (AlgH) family.

The polypeptide is UPF0301 protein Sputcn32_2681 (Shewanella putrefaciens (strain CN-32 / ATCC BAA-453)).